A 386-amino-acid chain; its full sequence is Bifunctional enzyme IspD/IspF (386 aa).

A 2-C-methyl-D-erythritol 4-phosphate cytidylyltransferase region spans residues methionine 1–proline 230. Residues arginine 231 to glycine 386 form a 2-C-methyl-D-erythritol 2,4-cyclodiphosphate synthase region. Residues aspartate 237 and histidine 239 each contribute to the a divalent metal cation site. 4-CDP-2-C-methyl-D-erythritol 2-phosphate is bound by residues aspartate 237–histidine 239 and histidine 263–serine 264. Histidine 271 lines the a divalent metal cation pocket. 4-CDP-2-C-methyl-D-erythritol 2-phosphate contacts are provided by residues aspartate 285–glycine 287, threonine 361–glutamate 364, and arginine 371.

The protein in the N-terminal section; belongs to the IspD/TarI cytidylyltransferase family. IspD subfamily. This sequence in the C-terminal section; belongs to the IspF family. A divalent metal cation is required as a cofactor.

It carries out the reaction 2-C-methyl-D-erythritol 4-phosphate + CTP + H(+) = 4-CDP-2-C-methyl-D-erythritol + diphosphate. It catalyses the reaction 4-CDP-2-C-methyl-D-erythritol 2-phosphate = 2-C-methyl-D-erythritol 2,4-cyclic diphosphate + CMP. It functions in the pathway isoprenoid biosynthesis; isopentenyl diphosphate biosynthesis via DXP pathway; isopentenyl diphosphate from 1-deoxy-D-xylulose 5-phosphate: step 2/6. The protein operates within isoprenoid biosynthesis; isopentenyl diphosphate biosynthesis via DXP pathway; isopentenyl diphosphate from 1-deoxy-D-xylulose 5-phosphate: step 4/6. Its function is as follows. Bifunctional enzyme that catalyzes the formation of 4-diphosphocytidyl-2-C-methyl-D-erythritol from CTP and 2-C-methyl-D-erythritol 4-phosphate (MEP) (IspD), and catalyzes the conversion of 4-diphosphocytidyl-2-C-methyl-D-erythritol 2-phosphate (CDP-ME2P) to 2-C-methyl-D-erythritol 2,4-cyclodiphosphate (ME-CPP) with a corresponding release of cytidine 5-monophosphate (CMP) (IspF). The protein is Bifunctional enzyme IspD/IspF of Novosphingobium aromaticivorans (strain ATCC 700278 / DSM 12444 / CCUG 56034 / CIP 105152 / NBRC 16084 / F199).